Here is a 312-residue protein sequence, read N- to C-terminus: Polyhedral envelope protein (312 aa).

It belongs to the baculoviridae PE family.

Its subcellular location is the virion membrane. Its function is as follows. Major component of the polyhedra envelope. This is Polyhedral envelope protein from Lymantria dispar multicapsid nuclear polyhedrosis virus (LdMNPV).